Here is a 23-residue protein sequence, read N- to C-terminus: Dermaseptin-4 (23 aa).

Glutamine amide is present on glutamine 23.

As to expression, expressed by the skin glands.

It localises to the secreted. Antimicrobial peptide, active against the Gram-positive bacterium S.aureus, and the Gram-negative bacteria E.coli and P.aeruginosa. Has hemolytic activity (5% hemolysis at 128 ug/ml). This Phyllomedusa tarsius (Brownbelly leaf frog) protein is Dermaseptin-4.